A 59-amino-acid chain; its full sequence is Prokaryotic ubiquitin-like protein UBact (59 aa).

The interval 1-59 (MEMTDPLRREEKKESSPDPKEESGPSRPDVSRPGRDSLLKRMKKVDPKQSEKYKQRTGQ) is disordered. Gln59 carries the post-translational modification Deamidated glutamine. Gln59 is covalently cross-linked (Isoglutamyl lysine isopeptide (Gln-Lys) (interchain with K-? in acceptor proteins)).

This sequence belongs to the ubiquitin-like protein UBact family. May be modified by deamidation of its C-terminal glutamine to glutamate by the adjacently encoded deamidase. This could be a prerequisite to the subsequent conjugation, as shown in the other prokaryotic ubiquitin-like protein Pup.

Functionally, may function as a protein modifier covalently attached to lysine residues of substrate proteins. This may serve to target the modified proteins for degradation by proteasomes. This Nitrospina gracilis (strain 3/211) protein is Prokaryotic ubiquitin-like protein UBact.